Consider the following 278-residue polypeptide: Thioredoxin-related transmembrane protein 1 (278 aa).

The first 26 residues, 1-26 (MAHLGRLMVPLAALVLLLWAVPGAHG), serve as a signal peptide directing secretion. Residues 27–132 (RRNNVRVLTD…FINFVSDKEW (106 aa)) form the Thioredoxin domain. Over 27–181 (RRNNVRVLTD…DLGIPAWGSY (155 aa)) the chain is Extracellular. Residues Cys56 and Cys59 each act as nucleophile in the active site. A disulfide bond links Cys56 and Cys59. Residues 182 to 202 (LVFAFATVLSGLLLGLCMIFV) form a helical membrane-spanning segment. At 203–278 (ADCLCPSKRR…VGLPSATDTS (76 aa)) the chain is on the cytoplasmic side. 2 S-palmitoyl cysteine lipidation sites follow: Cys205 and Cys207. The segment covering 217 to 226 (QYAKKTSPEF) has biased composition (polar residues). The tract at residues 217-278 (QYAKKTSPEF…VGLPSATDTS (62 aa)) is disordered. The span at 235–251 (EEQEADEEDVSEEEAED) shows a compositional bias: acidic residues. Phosphoserine occurs at positions 245 and 278.

Interacts with ATP2A2. Palmitoylated; palmitoylation is required for localization to mitochondria-associated endoplasmic reticulum membrane (MAM).

The protein resides in the endoplasmic reticulum membrane. Its subcellular location is the mitochondrion membrane. The protein localises to the secreted. The enzyme catalyses Catalyzes the rearrangement of -S-S- bonds in proteins.. Its function is as follows. Thiredoxin domain-containing protein that participates in various redox reactions through the reversible oxidation of its active center dithiol to a disulfide and catalyze dithiol-disulfide exchange reactions. Acts as a key inhibitor of the alternative triglyceride biosynthesis pathway by inhibiting the activity of TMEM68/DIESL at the endoplasmic reticulum, thereby restricting accumulation of triacylglycerol. The alternative triglyceride biosynthesis pathway mediates formation of triacylglycerol from diacylglycerol and membrane phospholipids. Acts as a protein disulfide isomerase by catalyzing formation or reduction of disulfide bonds. Specifically mediates formation of disulfide bonds of transmembrane proteins at the endoplasmic reticulum membrane. Involved in ER-associated degradation (ERAD) via its protein disulfide isomerase activity by acting on folding-defective polypeptides at the endoplasmic reticulum membrane. Acts as a negative regulator of platelet aggregation following secretion in the extracellular space. Acts as a regulator of endoplasmic reticulum-mitochondria contact sites via its ability to regulate redox signals. Regulates endoplasmic reticulum-mitochondria Ca(2+) flux. In Mus musculus (Mouse), this protein is Thioredoxin-related transmembrane protein 1.